Consider the following 260-residue polypeptide: Homeobox protein CDX-1 (260 aa).

A DNA-binding region (homeobox) is located at residues 149-208 (KDKYRVVYTDHQRLELEKEFHYSRYITIRRKAELAAALGLTERQVKIWFQNRRAKERKVN). Residues 152-173 (YRVVYTDHQRLELEKEFHYSRY) form an interaction with DNA region. The tract at residues 191–202 (RQVKIWFQNRRA) is interaction with 5-mCpG DNA. The tract at residues 204–260 (ERKVNKKKLQQQSQPTSTTTPTPPAVGTPGPMGTLCSGSAPSLVSSSPLTIKEEFMP) is disordered. 2 stretches are compositionally biased toward low complexity: residues 213-223 (QQQSQPTSTTT) and 240-252 (SGSAPSLVSSSPL).

The protein belongs to the Caudal homeobox family.

It is found in the nucleus. Functionally, plays a role in transcriptional regulation. Involved in activated KRAS-mediated transcriptional activation of PRKD1. Binds to the PRKD1 promoter. Could play a role in the terminal differentiation of the intestine. Binds preferentially to methylated DNA. This chain is Homeobox protein CDX-1 (CDX1), found in Gallus gallus (Chicken).